Reading from the N-terminus, the 119-residue chain is Large ribosomal subunit protein eL8 (119 aa).

The protein belongs to the eukaryotic ribosomal protein eL8 family. Part of the 50S ribosomal subunit. Probably part of the RNase P complex.

The protein localises to the cytoplasm. Its function is as follows. Multifunctional RNA-binding protein that recognizes the K-turn motif in ribosomal RNA, the RNA component of RNase P, box H/ACA, box C/D and box C'/D' sRNAs. The protein is Large ribosomal subunit protein eL8 of Archaeoglobus fulgidus (strain ATCC 49558 / DSM 4304 / JCM 9628 / NBRC 100126 / VC-16).